A 311-amino-acid polypeptide reads, in one-letter code: MLADRFTGSGLPSRLMRRVLAYIALTKPRVIELLLVATIPTMLLADRGHIDIRLILATLFGGWMGAASANTLNCVADADIDKVMKRTAKRPLARDAVPTRNAFVFGVVLGLASFAWLWWQANLLSGALVVATILFYVFVYTLGLKRRTSQNVVWGGAAGCMPALVGWSAVTGTIGWPALALFGVIFFWTPPHTWALAMRYKEDYRAAGVPMLPVVATERTVTKQIVIYTWLTVLTTLALVPATGVIYAAVALVAGAWFLLMAHQLYAGVRRGESVKPLRLFLQSNNYLAVVFCGLAVDSVLGWDTIGSFFG.

A run of 8 helical transmembrane segments spans residues 19–39 (VLAYIALTKPRVIELLLVATI), 55–75 (ILATLFGGWMGAASANTLNCV), 101–121 (NAFVFGVVLGLASFAWLWWQA), 123–143 (LLSGALVVATILFYVFVYTLG), 169–189 (AVTGTIGWPALALFGVIFFWT), 221–241 (VTKQIVIYTWLTVLTTLALVP), 242–262 (ATGVIYAAVALVAGAWFLLMA), and 290–310 (VVFCGLAVDSVLGWDTIGSFF).

The protein belongs to the UbiA prenyltransferase family. Protoheme IX farnesyltransferase subfamily.

The protein resides in the cell membrane. The catalysed reaction is heme b + (2E,6E)-farnesyl diphosphate + H2O = Fe(II)-heme o + diphosphate. Its pathway is porphyrin-containing compound metabolism; heme O biosynthesis; heme O from protoheme: step 1/1. Its function is as follows. Converts heme B (protoheme IX) to heme O by substitution of the vinyl group on carbon 2 of heme B porphyrin ring with a hydroxyethyl farnesyl side group. This chain is Protoheme IX farnesyltransferase, found in Nocardia farcinica (strain IFM 10152).